Reading from the N-terminus, the 501-residue chain is Aspartate--tRNA ligase, cytoplasmic (501 aa).

T52 is subject to Phosphothreonine. K74 is modified (N6-acetyllysine). E229 contributes to the L-aspartate binding site. Phosphoserine is present on S249. An aspartate region spans residues 251–254 (QLYK). Residue R273 participates in L-aspartate binding. Residues 273–275 (RAE) and 281–283 (RHL) contribute to the ATP site. N6-acetyllysine is present on K374. ATP is bound at residue E424. L-aspartate contacts are provided by S427 and R431. Position 472–475 (472–475 (GLER)) interacts with ATP.

The protein belongs to the class-II aminoacyl-tRNA synthetase family. Type 2 subfamily. As to quaternary structure, homodimer. Part of a multisubunit complex that groups tRNA ligases for Arg (RARS1), Asp (DARS1), Gln (QARS1), Ile (IARS1), Leu (LARS1), Lys (KARS1), Met (MARS1) the bifunctional ligase for Glu and Pro (EPRS1) and the auxiliary subunits AIMP1/p43, AIMP2/p38 and EEF1E1/p18.

The protein resides in the cytoplasm. It catalyses the reaction tRNA(Asp) + L-aspartate + ATP = L-aspartyl-tRNA(Asp) + AMP + diphosphate. Its function is as follows. Catalyzes the specific attachment of an amino acid to its cognate tRNA in a 2 step reaction: the amino acid (AA) is first activated by ATP to form AA-AMP and then transferred to the acceptor end of the tRNA. The sequence is that of Aspartate--tRNA ligase, cytoplasmic (Dars1) from Mus musculus (Mouse).